The chain runs to 255 residues: Probable cyclic nucleotide phosphodiesterase syc0937_d (255 aa).

7 residues coordinate Fe cation: aspartate 19, histidine 21, aspartate 59, asparagine 89, histidine 157, histidine 196, and histidine 198. AMP contacts are provided by residues histidine 21, aspartate 59, and 89–90 (NH). AMP is bound at residue histidine 198.

Belongs to the cyclic nucleotide phosphodiesterase class-III family. It depends on Fe(2+) as a cofactor.

In Synechococcus sp. (strain ATCC 27144 / PCC 6301 / SAUG 1402/1) (Anacystis nidulans), this protein is Probable cyclic nucleotide phosphodiesterase syc0937_d.